A 179-amino-acid chain; its full sequence is Beta-defensin 22 (179 aa).

Positions 1 to 20 (MKSLLSTLVIIMFLAHLVTG) are cleaved as a signal peptide. 3 disulfides stabilise this stretch: cysteine 27–cysteine 58, cysteine 34–cysteine 52, and cysteine 38–cysteine 59. Residues 105-150 (GTPTKTSAPAKTSAPAKTSTTTKASNAAKASTTTKASNAAKASAAT) are compositionally biased toward low complexity. The segment at 105–152 (GTPTKTSAPAKTSAPAKTSTTTKASNAAKASTTTKASNAAKASAATMA) is disordered.

Belongs to the beta-defensin family. Post-translationally, O-glycosylated; glycans contain alpha(2,3)-linked sialic acids. As to expression, specifically expressed in corpus epididymis and cauda epididymis with expression in corpus being highest (at protein level). Not detected in other tissues tested, including testis, prostate, seminal vesicle and vas deferens (at protein level).

It localises to the cytoplasmic vesicle. The protein resides in the secretory vesicle. The protein localises to the acrosome. Its subcellular location is the secreted. It is found in the extracellular space. Probable component of sperm glycocalyx. Likely protects and facilitates transport of sperm in the female reproductive tract. Probably released from the sperm surface during capacitation. The sequence is that of Beta-defensin 22 from Mus musculus (Mouse).